Reading from the N-terminus, the 452-residue chain is Mannan endo-1,6-alpha-mannosidase DCW1 (452 aa).

Positions 1–18 (MKFSIYLIISLFSSFSHA) are cleaved as a signal peptide. N-linked (GlcNAc...) asparagine glycosylation is found at N25, N81, N106, N130, N200, N237, N240, N262, N271, and N286. The GPI-anchor amidated glycine moiety is linked to residue G431. The propeptide at 432 to 452 (AGIITAIIGASLVGSCVWLIL) is removed in mature form.

This sequence belongs to the glycosyl hydrolase 76 family.

Its subcellular location is the cell membrane. It catalyses the reaction Random hydrolysis of (1-&gt;6)-alpha-D-mannosidic linkages in unbranched (1-&gt;6)-mannans.. Its function is as follows. Probable mannosidase required for normal synthesis of the cell wall. The sequence is that of Mannan endo-1,6-alpha-mannosidase DCW1 (DCW1) from Candida albicans (strain SC5314 / ATCC MYA-2876) (Yeast).